A 132-amino-acid chain; its full sequence is Myelin P2 protein (132 aa).

Residue serine 2 is modified to N-acetylserine. (9Z)-octadecenoate is bound at residue arginine 107. Arginine 107 serves as a coordination point for hexadecanoate. A disulfide bridge links cysteine 118 with cysteine 125. Residue 127–129 (RIY) participates in (9Z)-octadecenoate binding. Residue 127–129 (RIY) coordinates hexadecanoate.

It belongs to the calycin superfamily. Fatty-acid binding protein (FABP) family. In terms of assembly, monomer.

Its subcellular location is the cytoplasm. May play a role in lipid transport protein in Schwann cells. May bind cholesterol. The chain is Myelin P2 protein from Sus scrofa (Pig).